The sequence spans 439 residues: Ribosomal protein uS12 methylthiotransferase RimO (439 aa).

The MTTase N-terminal domain maps to 2 to 114 (SKLYLMSLGC…VDEMILKKTN (113 aa)). 6 residues coordinate [4Fe-4S] cluster: Cys11, Cys45, Cys77, Cys146, Cys150, and Cys153. The Radical SAM core domain maps to 132 to 363 (TGSNSHAFIK…VNEVIEKSFE (232 aa)).

It belongs to the methylthiotransferase family. RimO subfamily. [4Fe-4S] cluster serves as cofactor.

It is found in the cytoplasm. The enzyme catalyses L-aspartate(89)-[ribosomal protein uS12]-hydrogen + (sulfur carrier)-SH + AH2 + 2 S-adenosyl-L-methionine = 3-methylsulfanyl-L-aspartate(89)-[ribosomal protein uS12]-hydrogen + (sulfur carrier)-H + 5'-deoxyadenosine + L-methionine + A + S-adenosyl-L-homocysteine + 2 H(+). In terms of biological role, catalyzes the methylthiolation of an aspartic acid residue of ribosomal protein uS12. The chain is Ribosomal protein uS12 methylthiotransferase RimO from Campylobacter jejuni (strain RM1221).